The chain runs to 308 residues: Protoheme IX farnesyltransferase 2 (308 aa).

The next 9 helical transmembrane spans lie at 20-40, 47-67, 92-114, 118-137, 144-164, 174-194, 218-238, 240-260, and 275-295; these read VTKPGIIMGNLIAVVGGFLLA, AVLMLATLVGLSLVVASGCAI, IPLKQVLGLGIALGVLGFGLLAW, LAALLFAAFGYLVYVGLYSL, VYGTLVGSLSGAVPPVVGYCA, LILLAMFSLWQMPHSYAIAIF, LHIVFYIALFALVSTLLPLAG, TGVGFMAVSCVTSFWWLLMAL, and QVFGFSILTIAILSLTMALDF.

This sequence belongs to the UbiA prenyltransferase family. Protoheme IX farnesyltransferase subfamily.

It localises to the cell inner membrane. The catalysed reaction is heme b + (2E,6E)-farnesyl diphosphate + H2O = Fe(II)-heme o + diphosphate. It functions in the pathway porphyrin-containing compound metabolism; heme O biosynthesis; heme O from protoheme: step 1/1. In terms of biological role, converts heme B (protoheme IX) to heme O by substitution of the vinyl group on carbon 2 of heme B porphyrin ring with a hydroxyethyl farnesyl side group. This is Protoheme IX farnesyltransferase 2 from Shewanella loihica (strain ATCC BAA-1088 / PV-4).